Here is an 805-residue protein sequence, read N- to C-terminus: Leucine--tRNA ligase (805 aa).

The 'HIGH' region motif lies at 39-50; sequence PYPSGKGLHVGH. The 'KMSKS' region motif lies at 583–587; that stretch reads KMSKS. Lysine 586 contacts ATP.

This sequence belongs to the class-I aminoacyl-tRNA synthetase family.

It localises to the cytoplasm. The enzyme catalyses tRNA(Leu) + L-leucine + ATP = L-leucyl-tRNA(Leu) + AMP + diphosphate. This chain is Leucine--tRNA ligase, found in Mycoplasmoides gallisepticum (strain R(low / passage 15 / clone 2)) (Mycoplasma gallisepticum).